A 344-amino-acid polypeptide reads, in one-letter code: Putative glycosyltransferase EpsH (344 aa).

It belongs to the glycosyltransferase 2 family.

May be involved in the production of the exopolysaccharide (EPS) component of the extracellular matrix during biofilm formation. EPS is responsible for the adhesion of chains of cells into bundles. Required for biofilm maintenance. The chain is Putative glycosyltransferase EpsH (epsH) from Bacillus subtilis (strain 168).